The primary structure comprises 399 residues: Argininosuccinate synthase (399 aa).

9–17 (AYSGGLDTS) lines the ATP pocket. Residue Y85 participates in L-citrulline binding. An ATP-binding site is contributed by G115. L-aspartate-binding residues include T117, N121, and D122. N121 lines the L-citrulline pocket. L-citrulline-binding residues include R125, S173, E258, and Y270.

The protein belongs to the argininosuccinate synthase family. Type 1 subfamily. Homotetramer.

Its subcellular location is the cytoplasm. It catalyses the reaction L-citrulline + L-aspartate + ATP = 2-(N(omega)-L-arginino)succinate + AMP + diphosphate + H(+). It participates in amino-acid biosynthesis; L-arginine biosynthesis; L-arginine from L-ornithine and carbamoyl phosphate: step 2/3. This Streptococcus gordonii (strain Challis / ATCC 35105 / BCRC 15272 / CH1 / DL1 / V288) protein is Argininosuccinate synthase.